We begin with the raw amino-acid sequence, 99 residues long: NADH-quinone oxidoreductase subunit K (99 aa).

Helical transmembrane passes span 3–23, 28–48, and 59–79; these read PANYLILSALLFTIGTVGVLV, IVVFMSIELMLNAVNLTLVTF, and VMAFFVMVVAAAEVVIGLAII.

It belongs to the complex I subunit 4L family. NDH-1 is composed of 14 different subunits. Subunits NuoA, H, J, K, L, M, N constitute the membrane sector of the complex.

It localises to the cell membrane. The catalysed reaction is a quinone + NADH + 5 H(+)(in) = a quinol + NAD(+) + 4 H(+)(out). Functionally, NDH-1 shuttles electrons from NADH, via FMN and iron-sulfur (Fe-S) centers, to quinones in the respiratory chain. The immediate electron acceptor for the enzyme in this species is believed to be a menaquinone. Couples the redox reaction to proton translocation (for every two electrons transferred, four hydrogen ions are translocated across the cytoplasmic membrane), and thus conserves the redox energy in a proton gradient. This Frankia alni (strain DSM 45986 / CECT 9034 / ACN14a) protein is NADH-quinone oxidoreductase subunit K.